A 268-amino-acid polypeptide reads, in one-letter code: Ribosomal RNA small subunit methyltransferase A (268 aa).

6 residues coordinate S-adenosyl-L-methionine: Asn23, Ile25, Gly50, Glu72, Asp97, and Asn116.

Belongs to the class I-like SAM-binding methyltransferase superfamily. rRNA adenine N(6)-methyltransferase family. RsmA subfamily.

The protein localises to the cytoplasm. It catalyses the reaction adenosine(1518)/adenosine(1519) in 16S rRNA + 4 S-adenosyl-L-methionine = N(6)-dimethyladenosine(1518)/N(6)-dimethyladenosine(1519) in 16S rRNA + 4 S-adenosyl-L-homocysteine + 4 H(+). In terms of biological role, specifically dimethylates two adjacent adenosines (A1518 and A1519) in the loop of a conserved hairpin near the 3'-end of 16S rRNA in the 30S particle. May play a critical role in biogenesis of 30S subunits. This is Ribosomal RNA small subunit methyltransferase A from Rickettsia bellii (strain RML369-C).